A 206-amino-acid polypeptide reads, in one-letter code: Transcription elongation factor A protein-like 5 (206 aa).

Basic and acidic residues predominate over residues 1 to 26 (MEKLYKENEGKPENERNLESEGKPED). Positions 1–206 (MEKLYKENEG…QKDLEDVPYV (206 aa)) are disordered. Residues 27 to 42 (EGSTEDEGKSDEEEKP) are compositionally biased toward acidic residues. Residues 43 to 56 (DMEGKTECEGKRED) are compositionally biased toward basic and acidic residues. A compositionally biased stretch (acidic residues) spans 57–70 (EGEPGDEGQLEDEG). 4 stretches are compositionally biased toward basic and acidic residues: residues 71–86 (NQEK…KPQS), 102–113 (AAEKRPAEDYVP), 121–160 (DRGT…EELR), and 196–206 (GQKDLEDVPYV).

It belongs to the TFS-II family. TFA subfamily.

Its subcellular location is the nucleus. Its function is as follows. May be involved in transcriptional regulation. This chain is Transcription elongation factor A protein-like 5 (TCEAL5), found in Homo sapiens (Human).